The chain runs to 145 residues: MLIFLWCGAVCVSLLGAANIPPHPLNLINFMEMIRYTIPCEKTWGEYADYGCYCGAGGSGRPIDALDRCCYVHDNCYGDAEKKHKCNPKTQSYSYKLTKRTIICYGAAGTCGRIVCDCDRTAALCFGNSEYIEGHKNIDTARFCQ.

An N-terminal signal peptide occupies residues 1 to 17 (MLIFLWCGAVCVSLLGA). The propeptide occupies 18–25 (ANIPPHPL). Disulfide bonds link Cys-52/Cys-144, Cys-54/Cys-70, Cys-76/Cys-118, Cys-86/Cys-111, and Cys-104/Cys-116. The Ca(2+) site is built by Tyr-53, Gly-55, and Gly-57. Residue His-73 is part of the active site. Asp-119 is a catalytic residue.

This sequence belongs to the phospholipase A2 family. Group I subfamily. G49 sub-subfamily. Heterodimer; disulfide-linked. The A chains have phospholipase A2 activity and the B chains show homology with the basic protease inhibitors. Requires Ca(2+) as cofactor. In terms of processing, this enzyme lacks one of the seven disulfide bonds found in similar PLA2 proteins. In terms of tissue distribution, expressed by the venom gland.

It localises to the secreted. It carries out the reaction a 1,2-diacyl-sn-glycero-3-phosphocholine + H2O = a 1-acyl-sn-glycero-3-phosphocholine + a fatty acid + H(+). Its function is as follows. Snake venom phospholipase A2 (PLA2) that inhibits neuromuscular transmission by blocking acetylcholine release from the nerve termini. PLA2 catalyzes the calcium-dependent hydrolysis of the 2-acyl groups in 3-sn-phosphoglycerides. The polypeptide is Basic phospholipase A2 beta-bungarotoxin A-AL1 chain (Bungarus multicinctus (Many-banded krait)).